A 25-amino-acid chain; its full sequence is Gastrin-releasing peptide (25 aa).

M25 bears the Methionine amide mark.

This sequence belongs to the bombesin/neuromedin-B/ranatensin family.

Its subcellular location is the secreted. It localises to the cytoplasmic vesicle. The protein localises to the secretory vesicle lumen. In terms of biological role, stimulates the release of gastrin and other gastrointestinal hormones. This chain is Gastrin-releasing peptide (grp), found in Scyliorhinus canicula (Small-spotted catshark).